Reading from the N-terminus, the 69-residue chain is DNA-directed RNA polymerase subunit epsilon (69 aa).

It belongs to the RNA polymerase subunit epsilon family. As to quaternary structure, RNAP is composed of a core of 2 alpha, a beta and a beta' subunit. The core is associated with a delta subunit, and at least one of epsilon or omega. When a sigma factor is associated with the core the holoenzyme is formed, which can initiate transcription.

It carries out the reaction RNA(n) + a ribonucleoside 5'-triphosphate = RNA(n+1) + diphosphate. Functionally, a non-essential component of RNA polymerase (RNAP). This chain is DNA-directed RNA polymerase subunit epsilon, found in Lysinibacillus sphaericus (strain C3-41).